The primary structure comprises 299 residues: Coenzyme PQQ synthesis protein B (299 aa).

It belongs to the PqqB family.

It functions in the pathway cofactor biosynthesis; pyrroloquinoline quinone biosynthesis. Its function is as follows. May be involved in the transport of PQQ or its precursor to the periplasm. The chain is Coenzyme PQQ synthesis protein B from Xanthomonas campestris pv. campestris (strain 8004).